The primary structure comprises 411 residues: Arginine deiminase (411 aa).

Cysteine 401 acts as the Amidino-cysteine intermediate in catalysis.

It belongs to the arginine deiminase family.

Its subcellular location is the cytoplasm. The catalysed reaction is L-arginine + H2O = L-citrulline + NH4(+). The protein operates within amino-acid degradation; L-arginine degradation via ADI pathway; carbamoyl phosphate from L-arginine: step 1/2. This is Arginine deiminase from Staphylococcus haemolyticus (strain JCSC1435).